A 414-amino-acid polypeptide reads, in one-letter code: Particulate methane monooxygenase alpha subunit (414 aa).

A signal peptide spans 1-32 (MKTIKDRIAKWSAIGLLSAVAATAFYAPSASA). Cu cation-binding residues include His33, His48, His72, His137, and His139. A cupredoxin domain used to construct soluble pmoB (spmoB) region spans residues 33-172 (HGEKSQAAFM…MSEFRNPVTT (140 aa)). Transmembrane regions (helical) follow at residues 186-206 (GNTY…IGYW) and 235-255 (VAMG…SSAN). The tract at residues 265 to 414 (QAGTMRGMKP…IDAPLIPSFM (150 aa)) is cupredoxin domain used to construct soluble pmoB (spmoB).

In terms of assembly, m.capsulatus has two forms of methane monooxygenase, a soluble (sMMO) and a membrane-bound (particulate) type (pMMO). The particulate type is a nonamer composed of three alpha:beta:gamma heterotrimeric protomers assembled into a cylindrical structure; the beta and gamma subunits comprise the bulk of the membrane-spanning regions and the soluble regions are derived primarily from alpha subunits which form two antiparallel beta-barrel-like structures each. This assembly, also called pMMO hydroxylase (pMMO-H), is proposed to associate with methanol dehydrogenase (MDH), also designated as pMMO-R, to form the pMMO-C complex which seems to have greater methane monooxygenase activity. Cu(2+) is required as a cofactor.

The protein resides in the membrane. The enzyme catalyses methane + a quinol + O2 = methanol + a quinone + H2O. Functionally, methane monooxygenase is responsible for the initial oxygenation of methane to methanol in methanotrophs. At least in vitro, specific quinols can replace NADH as reductants. This Methylococcus capsulatus (strain ATCC 33009 / NCIMB 11132 / Bath) protein is Particulate methane monooxygenase alpha subunit (pmoB1).